Reading from the N-terminus, the 931-residue chain is Protein translocase subunit SecA (931 aa).

Residues Gln-87, 105–109 (GEGKT), and Asp-515 each bind ATP. Positions 915, 917, 926, and 927 each coordinate Zn(2+).

Belongs to the SecA family. As to quaternary structure, monomer and homodimer. Part of the essential Sec protein translocation apparatus which comprises SecA, SecYEG and auxiliary proteins SecDF-YajC and YidC. The cofactor is Zn(2+).

It is found in the cell inner membrane. The protein resides in the cytoplasm. It catalyses the reaction ATP + H2O + cellular proteinSide 1 = ADP + phosphate + cellular proteinSide 2.. Functionally, part of the Sec protein translocase complex. Interacts with the SecYEG preprotein conducting channel. Has a central role in coupling the hydrolysis of ATP to the transfer of proteins into and across the cell membrane, serving both as a receptor for the preprotein-SecB complex and as an ATP-driven molecular motor driving the stepwise translocation of polypeptide chains across the membrane. This is Protein translocase subunit SecA from Burkholderia ambifaria (strain MC40-6).